Reading from the N-terminus, the 366-residue chain is Putative neutrophil cytosol factor 1C (366 aa).

One can recognise a PX domain in the interval 1-101 (MYMFLVKWQD…DFFKVRPDDL (101 aa)). SH3 domains follow at residues 132 to 191 (IILQ…PLDS) and 202 to 261 (YAGE…KSGQ). Residues 261 to 366 (QDVSQAQRQI…STKRKLASAV (106 aa)) form a disordered region. Phosphoserine is present on residues Ser279 and Ser280. The span at 285–294 (HSIHQRSRKR) shows a compositional bias: basic residues. 4 positions are modified to phosphoserine: Ser296, Ser304, Ser321, and Ser324.

The protein localises to the cytoplasm. Its function is as follows. May be required for activation of the latent NADPH oxidase (necessary for superoxide production). This is Putative neutrophil cytosol factor 1C (NCF1C) from Homo sapiens (Human).